A 1216-amino-acid chain; its full sequence is RAB11-binding protein RELCH (1216 aa).

2 disordered regions span residues 1 to 73 (MAAM…GLPG) and 135 to 177 (GNFE…QLNR). The residue at position 2 (alanine 2) is an N-acetylalanine. Phosphoserine is present on residues serine 20 and serine 22. Acidic residues predominate over residues 21 to 31 (DSDEDDDEVAA). Threonine 32 bears the Phosphothreonine mark. Residues serine 54 and serine 56 each carry the phosphoserine modification. Positions 148–163 (GAPGVPGAAGVGGAGG) are enriched in gly residues. Residues serine 180 and serine 182 each carry the phosphoserine modification. Threonine 183 bears the Phosphothreonine mark. Serine 186 is subject to Phosphoserine. The stretch at 197–231 (NRETDEKVAVLEFELRKAKETIQALRANLTKAAEH) forms a coiled coil. In terms of domain architecture, LisH spans 255–287 (EKRALNFLVNEFLLKNNYKLTSITFSDENDDQD). Positions 359 to 397 (VQKLEDKISLLNSEKWSLMEQIRRLKSEMDFLKNEHFAI) form a coiled coil. A Phosphoserine modification is found at serine 385. Residues 401-477 (CDSVQPPLDQ…SSLSSKKTVH (77 aa)) are disordered. Positions 411 to 435 (LPHKDSEDSGQHPDVNSSDKGKNTD) are enriched in basic and acidic residues. Phosphoserine is present on serine 453. Residues 497 to 779 (CRMSADSRLG…SSKAKLHGEV (283 aa)) form an interaction with RAB11A and RAB11B region. 2 HEAT repeats span residues 601 to 639 (LLPQCWEQINHKYPERRLLVAESCGALAPYLPKEIRSSL) and 640 to 679 (VLSMLQQMLMEDKADLVREAVIKSLGIIMGYIDDPDKYHQ). Phosphoserine is present on serine 792. The HEAT 3 repeat unit spans residues 1004–1042 (VAPALVTLSSDPEFSVRIATIPAFGTIMETVIQRELLER). Serine 1149 carries the post-translational modification Phosphoserine.

Its subcellular location is the recycling endosome. The protein localises to the golgi apparatus. It is found in the trans-Golgi network. Its function is as follows. Regulates intracellular cholesterol distribution from recycling endosomes to the trans-Golgi network through interactions with RAB11 and OSBP. Functions in membrane tethering and promotes OSBP-mediated cholesterol transfer between RAB11-bound recycling endosomes and OSBP-bound Golgi-like membranes. This Homo sapiens (Human) protein is RAB11-binding protein RELCH.